The following is a 257-amino-acid chain: 1-(5-phosphoribosyl)-5-[(5-phosphoribosylamino)methylideneamino] imidazole-4-carboxamide isomerase (257 aa).

Asp-8 serves as the catalytic Proton acceptor. The Proton donor role is filled by Asp-131.

Belongs to the HisA/HisF family.

It localises to the cytoplasm. It carries out the reaction 1-(5-phospho-beta-D-ribosyl)-5-[(5-phospho-beta-D-ribosylamino)methylideneamino]imidazole-4-carboxamide = 5-[(5-phospho-1-deoxy-D-ribulos-1-ylimino)methylamino]-1-(5-phospho-beta-D-ribosyl)imidazole-4-carboxamide. Its pathway is amino-acid biosynthesis; L-histidine biosynthesis; L-histidine from 5-phospho-alpha-D-ribose 1-diphosphate: step 4/9. This is 1-(5-phosphoribosyl)-5-[(5-phosphoribosylamino)methylideneamino] imidazole-4-carboxamide isomerase from Nitrosospira multiformis (strain ATCC 25196 / NCIMB 11849 / C 71).